The sequence spans 357 residues: DNA replication and repair protein RecF (357 aa).

30-37 contacts ATP; the sequence is GANGSGKT.

The protein belongs to the RecF family.

It localises to the cytoplasm. In terms of biological role, the RecF protein is involved in DNA metabolism; it is required for DNA replication and normal SOS inducibility. RecF binds preferentially to single-stranded, linear DNA. It also seems to bind ATP. The chain is DNA replication and repair protein RecF from Shigella flexneri serotype 5b (strain 8401).